The chain runs to 319 residues: Ferrochelatase (319 aa).

Fe cation contacts are provided by His193 and Glu274.

The protein belongs to the ferrochelatase family.

Its subcellular location is the cytoplasm. It catalyses the reaction heme b + 2 H(+) = protoporphyrin IX + Fe(2+). It participates in porphyrin-containing compound metabolism; protoheme biosynthesis; protoheme from protoporphyrin-IX: step 1/1. In terms of biological role, catalyzes the ferrous insertion into protoporphyrin IX. This is Ferrochelatase from Actinobacillus pleuropneumoniae serotype 7 (strain AP76).